We begin with the raw amino-acid sequence, 113 residues long: Endoribonuclease SymE (113 aa).

Residues serine 29–proline 74 form the SpoVT-AbrB domain.

Belongs to the SymE family.

It localises to the cytoplasm. In terms of biological role, involved in the degradation and recycling of damaged RNA. It is itself a target for degradation by the ATP-dependent protease Lon. The polypeptide is Endoribonuclease SymE (Escherichia coli O1:K1 / APEC).